We begin with the raw amino-acid sequence, 256 residues long: Chloroplastic group IIB intron splicing facilitator CRS2, chloroplastic (256 aa).

The transit peptide at 1-45 directs the protein to the chloroplast; that stretch reads MSLLAAAIPSTSSHFSAPFLPSFRMPRKSLTAPLHRIRRPRPFTV. Tyr-74 is a tRNA binding site. His-79 (proton acceptor) is an active-site residue. 3 residues coordinate tRNA: Tyr-124, Asn-126, and Asn-172.

It belongs to the PTH family. CRS2 subfamily. Interacts with CAF1 and CAF2. Part of large ribonucleo-protein complexes that include group IIB introns and either CAF1 or CAF2.

It is found in the plastid. It localises to the chloroplast stroma. In terms of biological role, required for the splicing of group IIB introns in chloroplasts. Forms complexes with either CAF1 or CAF2 which, in turn, interact with RNA and confer intron specificity of the splicing particles. Has no peptidyl-tRNA hydrolase activity. This is Chloroplastic group IIB intron splicing facilitator CRS2, chloroplastic (CRS2) from Zea mays (Maize).